A 366-amino-acid chain; its full sequence is Cytochrome c peroxidase, mitochondrial (366 aa).

The N-terminal 46 residues, 1–46, are a transit peptide targeting the mitochondrion; sequence MASAARSASRAFLRSTPTTSSFRPAVRAARFALPAQGFRAAGRRGY. The active-site Proton acceptor is the His127. A heme b-binding site is contributed by His250. Trp266 functions as the Tryptophan radical intermediate in the catalytic mechanism.

The protein belongs to the peroxidase family. Cytochrome c peroxidase subfamily. Forms a one-to-one complex with cytochrome c. Requires heme b as cofactor.

The protein resides in the mitochondrion matrix. The protein localises to the mitochondrion intermembrane space. The enzyme catalyses 2 Fe(II)-[cytochrome c] + H2O2 + 2 H(+) = 2 Fe(III)-[cytochrome c] + 2 H2O. In terms of biological role, destroys radicals which are normally produced within the cells and which are toxic to biological systems. The chain is Cytochrome c peroxidase, mitochondrial (ccp1) from Aspergillus fumigatus (strain ATCC MYA-4609 / CBS 101355 / FGSC A1100 / Af293) (Neosartorya fumigata).